The chain runs to 330 residues: MGDTSPRTSVSTDGDTDHNNLMFDEGHLGIGASDSSDRSKSKMDQKTLRRLAQNREAARKSRLRKKAYVQQLENSRLKLTQLEQELQRARQQGVFISSSGDQAHSTAGDGAMAFDVEYRRWQEDKNRQMKELSSAIDSHATDSELRIIVDGVIAHYEELYRIKGNAAKSDVFHLLSGMWKTPAERCFLWLGGFRSSELLKLIASQLEPLTEQQSLDINNLQQSSQQAEDALSQGMDNLQQSLADTLSSGTLGSSSSGNVASYMGQMAMAMGKLGTLEGFIRQADNLRLQTYQQMVRLLTTRQSARALLAVHNYTLRLRALSSLWLARPRE.

Polar residues predominate over residues 1 to 13; the sequence is MGDTSPRTSVSTD. Positions 1–64 are disordered; sequence MGDTSPRTSV…REAARKSRLR (64 aa). The span at 35 to 47 shows a compositional bias: basic and acidic residues; that stretch reads SSDRSKSKMDQKT. The region spanning 44–107 is the bZIP domain; sequence DQKTLRRLAQ…SSGDQAHSTA (64 aa). Coiled coils occupy residues 45-98 and 211-244; these read QKTL…FISS and EQQS…SLAD. The interval 46-66 is basic motif; the sequence is KTLRRLAQNREAARKSRLRKK. The tract at residues 72-86 is leucine-zipper; sequence LENSRLKLTQLEQEL. In terms of domain architecture, DOG1 spans 111–327; it reads AMAFDVEYRR…RALSSLWLAR (217 aa).

It belongs to the bZIP family. As to quaternary structure, binds DNA as a dimer. Interaction with the Dof domain protein OBP1 enhances the binding to the ocs element. Interacts with NPR1, NPR3 and NPR4. As to expression, predominantly expressed in roots.

It is found in the nucleus. Transcriptional activator that binds specifically to the DNA sequence 5'-TGACG-3'. Recognizes ocs elements like the as-1 motif of the cauliflower mosaic virus 35S promoter. Binding to the as-1-like cis elements mediate auxin- and salicylic acid-inducible transcription. May be involved in the induction of the systemic acquired resistance (SAR) via its interaction with NPR1. Could also bind to the Hex-motif (5'-TGACGTGG-3') another cis-acting element found in plant histone promoters. This Arabidopsis thaliana (Mouse-ear cress) protein is Transcription factor TGA5 (TGA5).